Reading from the N-terminus, the 363-residue chain is Protein RecA (363 aa).

77–84 provides a ligand contact to ATP; it reads GPESSGKT.

The protein belongs to the RecA family.

The protein localises to the cytoplasm. Its function is as follows. Can catalyze the hydrolysis of ATP in the presence of single-stranded DNA, the ATP-dependent uptake of single-stranded DNA by duplex DNA, and the ATP-dependent hybridization of homologous single-stranded DNAs. It interacts with LexA causing its activation and leading to its autocatalytic cleavage. This chain is Protein RecA, found in Agrobacterium fabrum (strain C58 / ATCC 33970) (Agrobacterium tumefaciens (strain C58)).